A 236-amino-acid chain; its full sequence is Ribosomal RNA small subunit methyltransferase G (236 aa).

Residues glycine 80, 131–132, and arginine 148 each bind S-adenosyl-L-methionine; that span reads AE.

It belongs to the methyltransferase superfamily. RNA methyltransferase RsmG family.

The protein resides in the cytoplasm. In terms of biological role, specifically methylates the N7 position of a guanine in 16S rRNA. This is Ribosomal RNA small subunit methyltransferase G from Ureaplasma parvum serovar 3 (strain ATCC 27815 / 27 / NCTC 11736).